The following is a 129-amino-acid chain: D-ribose pyranase (129 aa).

Histidine 20 serves as the catalytic Proton donor. Substrate contacts are provided by residues aspartate 28, histidine 96, and 118–120 (YAN).

This sequence belongs to the RbsD / FucU family. RbsD subfamily. In terms of assembly, homodecamer.

It is found in the cytoplasm. The enzyme catalyses beta-D-ribopyranose = beta-D-ribofuranose. The protein operates within carbohydrate metabolism; D-ribose degradation; D-ribose 5-phosphate from beta-D-ribopyranose: step 1/2. Its function is as follows. Catalyzes the interconversion of beta-pyran and beta-furan forms of D-ribose. This Staphylococcus haemolyticus (strain JCSC1435) protein is D-ribose pyranase.